We begin with the raw amino-acid sequence, 33 residues long: Beta-amanitin proprotein (33 aa).

Residues 1–10 (MSDINATRLP) constitute a propeptide that is removed on maturation. The cyclopeptide (Ile-Pro) cross-link spans 11 to 18 (IWGIGCDP). The segment at residues 12-16 (WGIGC) is a cross-link (2'-cysteinyl-6'-hydroxytryptophan sulfoxide (Trp-Cys)). Positions 19-33 (CVGDEVTALLTRGEA) are excised as a propeptide.

This sequence belongs to the MSDIN fungal toxin family. Processed by the macrocyclase-peptidase enzyme POPB to yield a toxic cyclic decapeptide. POPB first removes 10 residues from the N-terminus. Conformational trapping of the remaining peptide forces the enzyme to release this intermediate rather than proceed to macrocyclization. The enzyme rebinds the remaining peptide in a different conformation and catalyzes macrocyclization of the N-terminal 8 residues.

In terms of biological role, toxin belonging to the bicyclic octapeptides amatoxins that acts by binding non-competitively to RNA polymerase II and greatly slowing the elongation of transcripts from target promoters. This is Beta-amanitin proprotein from Amanita fuligineoides.